We begin with the raw amino-acid sequence, 310 residues long: UDP-N-acetylenolpyruvoylglucosamine reductase (310 aa).

An FAD-binding PCMH-type domain is found at K27–A192. Residue R171 is part of the active site. Catalysis depends on S223, which acts as the Proton donor. Residue E293 is part of the active site.

Belongs to the MurB family. FAD serves as cofactor.

It is found in the cytoplasm. The enzyme catalyses UDP-N-acetyl-alpha-D-muramate + NADP(+) = UDP-N-acetyl-3-O-(1-carboxyvinyl)-alpha-D-glucosamine + NADPH + H(+). It participates in cell wall biogenesis; peptidoglycan biosynthesis. In terms of biological role, cell wall formation. The chain is UDP-N-acetylenolpyruvoylglucosamine reductase from Caldicellulosiruptor saccharolyticus (strain ATCC 43494 / DSM 8903 / Tp8T 6331).